A 268-amino-acid chain; its full sequence is Bis(5'-nucleosyl)-tetraphosphatase, symmetrical (268 aa).

It belongs to the Ap4A hydrolase family.

The enzyme catalyses P(1),P(4)-bis(5'-adenosyl) tetraphosphate + H2O = 2 ADP + 2 H(+). Its function is as follows. Hydrolyzes diadenosine 5',5'''-P1,P4-tetraphosphate to yield ADP. The protein is Bis(5'-nucleosyl)-tetraphosphatase, symmetrical of Vibrio parahaemolyticus serotype O3:K6 (strain RIMD 2210633).